A 210-amino-acid chain; its full sequence is ATP phosphoribosyltransferase (210 aa).

It belongs to the ATP phosphoribosyltransferase family. Short subfamily. In terms of assembly, heteromultimer composed of HisG and HisZ subunits.

Its subcellular location is the cytoplasm. It catalyses the reaction 1-(5-phospho-beta-D-ribosyl)-ATP + diphosphate = 5-phospho-alpha-D-ribose 1-diphosphate + ATP. It functions in the pathway amino-acid biosynthesis; L-histidine biosynthesis; L-histidine from 5-phospho-alpha-D-ribose 1-diphosphate: step 1/9. Functionally, catalyzes the condensation of ATP and 5-phosphoribose 1-diphosphate to form N'-(5'-phosphoribosyl)-ATP (PR-ATP). Has a crucial role in the pathway because the rate of histidine biosynthesis seems to be controlled primarily by regulation of HisG enzymatic activity. The chain is ATP phosphoribosyltransferase from Picosynechococcus sp. (strain ATCC 27264 / PCC 7002 / PR-6) (Agmenellum quadruplicatum).